The sequence spans 120 residues: MIQKNSRLVVADNSGAKEVLVIGILGGTRRRYANIGDVVVVAVKSGSGGTVKKHDVLKGVIVRSKSGIRHENGSYIKFYDNALVLLKEDLSIIGTRIFGPVVRELGKKFSKIVSLAQLVL.

It belongs to the universal ribosomal protein uL14 family. Part of the 50S ribosomal subunit. Forms a cluster with proteins L3 and L19. In the 70S ribosome, L14 and L19 interact and together make contacts with the 16S rRNA in bridges B5 and B8.

Its function is as follows. Binds to 23S rRNA. Forms part of two intersubunit bridges in the 70S ribosome. The chain is Large ribosomal subunit protein uL14 from Phytoplasma australiense.